The following is an 845-amino-acid chain: uncharacterized protein (845 aa).

2 disordered regions span residues 17–37 (RRKQ…NDQP) and 550–573 (AATE…NESL). Residues 622–707 (LSEQRFEREN…ELKKSNEHTR (86 aa)) are a coiled coil.

This is an uncharacterized protein from Saccharum officinarum (Sugarcane).